A 343-amino-acid polypeptide reads, in one-letter code: Methylthioribose-1-phosphate isomerase (343 aa).

Substrate is bound by residues 48–50 (RGA), Arg88, and Gln193. The active-site Proton donor is the Asp234. 244 to 245 (NK) contacts substrate.

The protein belongs to the eIF-2B alpha/beta/delta subunits family. MtnA subfamily.

The enzyme catalyses 5-(methylsulfanyl)-alpha-D-ribose 1-phosphate = 5-(methylsulfanyl)-D-ribulose 1-phosphate. The protein operates within amino-acid biosynthesis; L-methionine biosynthesis via salvage pathway; L-methionine from S-methyl-5-thio-alpha-D-ribose 1-phosphate: step 1/6. In terms of biological role, catalyzes the interconversion of methylthioribose-1-phosphate (MTR-1-P) into methylthioribulose-1-phosphate (MTRu-1-P). This Thermotoga maritima (strain ATCC 43589 / DSM 3109 / JCM 10099 / NBRC 100826 / MSB8) protein is Methylthioribose-1-phosphate isomerase.